Here is a 474-residue protein sequence, read N- to C-terminus: Dol-P-Glc:Glc(2)Man(9)GlcNAc(2)-PP-Dol alpha-1,2-glucosyltransferase (474 aa).

Residues 1–6 (MAQLEG) are Cytoplasmic-facing. Residues 7–27 (YYFSAALSCTFLVSCLLFSAF) traverse the membrane as a helical segment. Over 28-64 (SRALREPYMDEIFHLPQAQRYCEGRFSLSQWDPMITT) the chain is Extracellular. A helical transmembrane segment spans residues 65 to 85 (LPGLYLVSVGVVKPASWLLGW). Residues 86–97 (SEHVICSIGVLR) lie on the Cytoplasmic side of the membrane. Residues 98–118 (FVNLLFSVGNFYLLYLLFRKV) form a helical membrane-spanning segment. The Extracellular segment spans residues 119-126 (QPRNKASS). Residues 127–147 (SIQRILSTLTLAVFPTLYFFN) form a helical membrane-spanning segment. The Cytoplasmic segment spans residues 148–150 (FLY). A helical transmembrane segment spans residues 151–171 (YTEAGSVFFTLFAYLMCLYGN). Topologically, residues 172-175 (HRTS) are extracellular. Residues 176–196 (ALLGFCGFMFRQTNIIWAAFC) traverse the membrane as a helical segment. Topologically, residues 197 to 256 (AGHLIAQKCSEAWKIELQKKKEERLAPTKGPLSELRRVLQFLLVYAMSLKNLRMLFLLTW) are cytoplasmic. Residues 257-277 (PYVLLLLAFFAFVVVNGGIVV) form a helical membrane-spanning segment. Residues 278 to 283 (GDRSSH) lie on the Extracellular side of the membrane. The helical transmembrane segment at 284-304 (EACLHFPQLFYFFSFTAFFSF) threads the bilayer. The Cytoplasmic portion of the chain corresponds to 305–317 (PHLLSLTKVKTFL). Residues 318 to 338 (SLVWKRRVQFSVVTLVSILLV) form a helical membrane-spanning segment. The Extracellular segment spans residues 339–365 (WKFTYVHKYLLADNRHYTFYVWKRVFQ). Residues 366–386 (RHEVVKYLLVPAYIFAGWAIA) form a helical membrane-spanning segment. At 387-392 (DSLKAK) the chain is on the cytoplasmic side. The helical transmembrane segment at 393–413 (SIFWNLMFFVCLVASTVPQKL) threads the bilayer. Residues 414–436 (LEFRYFILPYIIYRLNIPLPPIS) lie on the Extracellular side of the membrane. Residues 437-457 (RLVCELGCYTVVNFVTFYIFL) form a helical membrane-spanning segment. Residues 458–473 (NKTFQWPNSQDIQRFM) are Cytoplasmic-facing.

This sequence belongs to the ALG10 glucosyltransferase family. As to quaternary structure, interacts with KCNH1; may regulate KCNH1, possibly by regulating its N-glycosylation. Interacts with KCNH2; may reduce KCNH2 sensitivity to classic proarrhythmic drug blockade, possibly by regulating its N-glycosylation.

The protein localises to the endoplasmic reticulum membrane. The enzyme catalyses an alpha-D-Glc-(1-&gt;3)-alpha-D-Glc-(1-&gt;3)-alpha-D-Man-(1-&gt;2)-alpha-D-Man-(1-&gt;2)-alpha-D-Man-(1-&gt;3)-[alpha-D-Man-(1-&gt;2)-alpha-D-Man-(1-&gt;3)-[alpha-D-Man-(1-&gt;2)-alpha-D-Man-(1-&gt;6)]-alpha-D-Man-(1-&gt;6)]-beta-D-Man-(1-&gt;4)-beta-D-GlcNAc-(1-&gt;4)-alpha-D-GlcNAc-diphospho-di-trans,poly-cis-dolichol + a di-trans,poly-cis-dolichyl beta-D-glucosyl phosphate = a alpha-D-Glc-(1-&gt;2)-alpha-D-Glc-(1-&gt;3)-alpha-D-Glc-(1-&gt;3)-alpha-D-Man-(1-&gt;2)-alpha-D-Man-(1-&gt;2)-alpha-D-Man-(1-&gt;3)-[alpha-D-Man-(1-&gt;2)-alpha-D-Man-(1-&gt;3)-[alpha-D-Man-(1-&gt;2)-alpha-D-Man-(1-&gt;6)]-alpha-D-Man-(1-&gt;6)]-beta-D-Man-(1-&gt;4)-beta-D-GlcNAc-(1-&gt;4)-alpha-D-GlcNAc-diphospho-di-trans,poly-cis-dolichol + a di-trans,poly-cis-dolichyl phosphate + H(+). It functions in the pathway protein modification; protein glycosylation. Dol-P-Glc:Glc(2)Man(9)GlcNAc(2)-PP-Dol alpha-1,2-glucosyltransferase that operates in the biosynthetic pathway of dolichol-linked oligosaccharides, the glycan precursors employed in protein asparagine (N)-glycosylation. The assembly of dolichol-linked oligosaccharides begins on the cytosolic side of the endoplasmic reticulum membrane and finishes in its lumen. The sequential addition of sugars to dolichol pyrophosphate produces dolichol-linked oligosaccharides containing fourteen sugars, including two GlcNAcs, nine mannoses and three glucoses. Once assembled, the oligosaccharide is transferred from the lipid to nascent proteins by oligosaccharyltransferases. In the lumen of the endoplasmic reticulum, adds the third and last glucose residue from dolichyl phosphate glucose (Dol-P-Glc) onto the lipid-linked oligosaccharide intermediate Glc(2)Man(9)GlcNAc(2)-PP-Dol to produce Glc(3)Man(9)GlcNAc(2)-PP-Dol. The polypeptide is Dol-P-Glc:Glc(2)Man(9)GlcNAc(2)-PP-Dol alpha-1,2-glucosyltransferase (Mus musculus (Mouse)).